Reading from the N-terminus, the 362-residue chain is Epoxide hydrolase 4 (362 aa).

A helical; Signal-anchor for type II membrane protein transmembrane segment spans residues 17 to 37 (SLLFWSLVYCYCGLCASIHLL). Positions 94–211 (PLMLLLHGFP…EYILRHPAQL (118 aa)) constitute an AB hydrolase-1 domain. The active-site Nucleophile is D169. The active-site Proton donor is Y281. The Proton acceptor role is filled by H336.

This sequence belongs to the AB hydrolase superfamily. Epoxide hydrolase family.

It is found in the membrane. This Homo sapiens (Human) protein is Epoxide hydrolase 4 (EPHX4).